Reading from the N-terminus, the 492-residue chain is 6-phosphogluconate dehydrogenase, decarboxylating (492 aa).

Residues 13-18 (GLAVMG), 36-38 (NRT), 78-80 (VKA), and asparagine 106 contribute to the NADP(+) site. Asparagine 106 lines the substrate pocket. Serine 107 is modified (phosphoserine). Residue 132–134 (SGG) participates in substrate binding. Catalysis depends on lysine 187, which acts as the Proton acceptor. 190–191 (HN) contacts substrate. Residue glutamate 194 is the Proton donor of the active site. Tyrosine 195 provides a ligand contact to substrate. Residue serine 215 is modified to Phosphoserine. The substrate site is built by lysine 264, arginine 291, arginine 449, and histidine 455.

It belongs to the 6-phosphogluconate dehydrogenase family. In terms of assembly, homodimer.

The enzyme catalyses 6-phospho-D-gluconate + NADP(+) = D-ribulose 5-phosphate + CO2 + NADPH. It participates in carbohydrate degradation; pentose phosphate pathway; D-ribulose 5-phosphate from D-glucose 6-phosphate (oxidative stage): step 3/3. Functionally, catalyzes the oxidative decarboxylation of 6-phosphogluconate to ribulose 5-phosphate and CO(2), with concomitant reduction of NADP to NADPH. The sequence is that of 6-phosphogluconate dehydrogenase, decarboxylating from Schizosaccharomyces pombe (strain 972 / ATCC 24843) (Fission yeast).